The chain runs to 217 residues: Large ribosomal subunit protein uL3 (217 aa).

The disordered stretch occupies residues 129–162 (SRGPMSHGSKNHRAPGSTGAGTTPGRIYPGKRMA). The span at 142–153 (APGSTGAGTTPG) shows a compositional bias: low complexity.

The protein belongs to the universal ribosomal protein uL3 family. In terms of assembly, part of the 50S ribosomal subunit. Forms a cluster with proteins L14 and L19.

Functionally, one of the primary rRNA binding proteins, it binds directly near the 3'-end of the 23S rRNA, where it nucleates assembly of the 50S subunit. This is Large ribosomal subunit protein uL3 from Prochlorococcus marinus (strain MIT 9215).